The following is a 385-amino-acid chain: MNHLRAEGPASVLAIGTANPENILIQDEFPDYYFRVTKSEHMTQLKEKFRKICDKSMIRKRNCFLNEEHLKQNPRLVEHEMQTLDARQDMLVVEVPKLGKDACAKAIKEWGQPKSKITHLIFTSASTTDMPGADYHCAKLLGLSPSVKRVMMYQLGCYGGGTVLRIAKDIAENNKGARVLAVCCDIMACLFRGPSDSDLELLVGQAIFGDGAAAVIVGAEPDESVGERPIFELVSTGQTILPNSEGTIGGHIREAGLIFDLHKDVPMLISNNIEKCLIEAFTPIGISDWNSIFWITHPGGKAILDKVEEKLHLKSDKFVDSRHVLSEHGNMSSSTVLFVMDELRKRSLEEGKSTTGDGFEWGVLFGFGPGLTVERVVVRSVPIKY.

Cys-157 is an active-site residue.

This sequence belongs to the thiolase-like superfamily. Chalcone/stilbene synthases family. In terms of tissue distribution, expressed in male and female flowers, and seedlings.

The protein localises to the cytoplasm. Polyketide synthase responsible for the biosynthesis of secondary metabolites. The sequence is that of Polyketide synthase 3 (PKSF3) from Cannabis sativa (Hemp).